Consider the following 1339-residue polypeptide: Tuberous sclerosis 2 protein homolog (1339 aa).

Ser1036 carries the phosphoserine modification. Positions 1109-1303 (ILANTNPSED…AERLRQLKRL (195 aa)) constitute a Rap-GAP domain.

As to quaternary structure, interacts with tsc1.

The protein resides in the cytoplasm. It is found in the nucleus. Its function is as follows. Together with tsc1, required for uptake of various amino acids from the environment and for proper conjugation. Involved in induction of gene expression of permeases and genes required for meiosis upon nitrogen starvation. May act as a GTPase-activating protein (GAP) for the small GTPase rhb1. The chain is Tuberous sclerosis 2 protein homolog (tsc2) from Schizosaccharomyces pombe (strain 972 / ATCC 24843) (Fission yeast).